A 466-amino-acid polypeptide reads, in one-letter code: Soluble pyridine nucleotide transhydrogenase (466 aa).

36-45 contacts FAD; sequence ERYHNVGGGC.

Belongs to the class-I pyridine nucleotide-disulfide oxidoreductase family. The cofactor is FAD.

Its subcellular location is the cytoplasm. It carries out the reaction NAD(+) + NADPH = NADH + NADP(+). Its function is as follows. Conversion of NADPH, generated by peripheral catabolic pathways, to NADH, which can enter the respiratory chain for energy generation. This chain is Soluble pyridine nucleotide transhydrogenase, found in Salmonella gallinarum (strain 287/91 / NCTC 13346).